Here is a 551-residue protein sequence, read N- to C-terminus: Synapse-associated protein of 47 kDa (551 aa).

Disordered regions lie at residues 20–72 and 117–198; these read AGDE…AGKR and AMPA…GQGK. Low complexity-rich tracts occupy residues 26–59, 117–128, and 137–146; these read PAPTGDAPAAAPAASTSVEATASSAVDPEAAAAA, AMPAMPSIPSIP, and DGAEGAEGAV. Ser-178 and Ser-182 each carry phosphoserine. A compositionally biased stretch (gly residues) spans 182-197; it reads SGGGTPTGDEGQIGQG. Thr-186 carries the post-translational modification Phosphothreonine. Residues 295–347 enclose the BSD domain; that stretch reads VDFEFSYDTAYPTAIAIMAEDKALETMRFELVPKIITEENFWRNYFYRVSLII. Residues 360–391 form a disordered region; that stretch reads VGQASSGEDANEVATKEKKSKTAEPAKGDSSV. Residues 373–386 are compositionally biased toward basic and acidic residues; the sequence is ATKEKKSKTAEPAK. At Ser-433 the chain carries Phosphoserine. Residues 487 to 551 form a disordered region; it reads KDYEVVDEGG…DLIEDTDDLK (65 aa). The segment covering 514-523 has biased composition (acidic residues); that stretch reads DDTEADEDEP. Residues 524–535 are compositionally biased toward polar residues; that stretch reads TISNLRTRSTNN. Position 530 is a phosphothreonine (Thr-530). Acidic residues predominate over residues 536–551; it reads DWEEYADLIEDTDDLK.

Expressed specifically in neurons and transported to synaptic terminals.

The sequence is that of Synapse-associated protein of 47 kDa (Sap47) from Drosophila melanogaster (Fruit fly).